The following is a 132-amino-acid chain: Small ribosomal subunit protein uS8 (132 aa).

This sequence belongs to the universal ribosomal protein uS8 family. As to quaternary structure, part of the 30S ribosomal subunit. Contacts proteins S5 and S12.

Its function is as follows. One of the primary rRNA binding proteins, it binds directly to 16S rRNA central domain where it helps coordinate assembly of the platform of the 30S subunit. The sequence is that of Small ribosomal subunit protein uS8 (rpsH) from Caldanaerobacter subterraneus subsp. tengcongensis (strain DSM 15242 / JCM 11007 / NBRC 100824 / MB4) (Thermoanaerobacter tengcongensis).